The chain runs to 583 residues: MRASQYFISTLKEAPSDAEVVSQKLMLRAGFIRKVAAGIYSYLPIGLRVIRKVEDIVRDEMNRAGALELTMPLVQPAELWDETGRWEQMGAEMLRFKDRHQRDFALQPTSEEVVTDIARQELKSYRQLPKNFYQIQTKFRDERRPRFGVMRGREFTMKDAYSFDRDVAAAGRSYDAMYAAYCRIFDRLGLTYRAVAADTGAIGGDRSHEFQVIADTGEDAIVYCPGSDYAANIELAEALPLLATRAAPAQALEKTPTPGRTTCEEVAKLLGVPLETTVKSLVLATDDVDDTNKPAGVTVWLLLVRGDHELNEVKAGKIPGLKAGFRFATETEIAERFGCQPGYLGPVGVNKAVKIVADRTVANMADFICGANEADFHLTGTNWGRDLPEPDLVADLRNIIEGDPSPDGRGRLAIQRGIEVGHVFYLGTKYSQSMNATFLDENGKPKHFEMGCYGIGVTRILGAAIEQNHDARGIIWPDAIAPFRVVVCPVGWGKSDAVRTEATKLYETLCAGGIDVILDDRDERPGVMFADWELIGVPHRVVIGDRGLKDGMAEYQGRRDAEAAKIPLAELAAFVGSKLRPTA.

The protein belongs to the class-II aminoacyl-tRNA synthetase family. ProS type 1 subfamily. Homodimer.

The protein resides in the cytoplasm. The enzyme catalyses tRNA(Pro) + L-proline + ATP = L-prolyl-tRNA(Pro) + AMP + diphosphate. Functionally, catalyzes the attachment of proline to tRNA(Pro) in a two-step reaction: proline is first activated by ATP to form Pro-AMP and then transferred to the acceptor end of tRNA(Pro). As ProRS can inadvertently accommodate and process non-cognate amino acids such as alanine and cysteine, to avoid such errors it has two additional distinct editing activities against alanine. One activity is designated as 'pretransfer' editing and involves the tRNA(Pro)-independent hydrolysis of activated Ala-AMP. The other activity is designated 'posttransfer' editing and involves deacylation of mischarged Ala-tRNA(Pro). The misacylated Cys-tRNA(Pro) is not edited by ProRS. The polypeptide is Proline--tRNA ligase (Aromatoleum aromaticum (strain DSM 19018 / LMG 30748 / EbN1) (Azoarcus sp. (strain EbN1))).